A 546-amino-acid polypeptide reads, in one-letter code: CTP synthase (546 aa).

An amidoligase domain region spans residues 1 to 266 (MAKYYIFITG…DSYVCDRFCI (266 aa)). Serine 14 is a binding site for CTP. Serine 14 serves as a coordination point for UTP. ATP-binding positions include 15 to 20 (SLGKGI) and aspartate 72. Mg(2+)-binding residues include aspartate 72 and glutamate 140. Residues 147-149 (DIE), 187-192 (KTKPTQ), and lysine 223 each bind CTP. UTP-binding positions include 187–192 (KTKPTQ) and lysine 223. Positions 291–544 (NIGIIGKYTE…VKAAFDFKNK (254 aa)) constitute a Glutamine amidotransferase type-1 domain. An L-glutamine-binding site is contributed by glycine 352. Catalysis depends on cysteine 379, which acts as the Nucleophile; for glutamine hydrolysis. L-glutamine contacts are provided by residues 380–383 (LGMQ), glutamate 403, and arginine 470. Catalysis depends on residues histidine 517 and glutamate 519.

The protein belongs to the CTP synthase family. As to quaternary structure, homotetramer.

The catalysed reaction is UTP + L-glutamine + ATP + H2O = CTP + L-glutamate + ADP + phosphate + 2 H(+). It carries out the reaction L-glutamine + H2O = L-glutamate + NH4(+). The enzyme catalyses UTP + NH4(+) + ATP = CTP + ADP + phosphate + 2 H(+). It functions in the pathway pyrimidine metabolism; CTP biosynthesis via de novo pathway; CTP from UDP: step 2/2. Allosterically activated by GTP, when glutamine is the substrate; GTP has no effect on the reaction when ammonia is the substrate. The allosteric effector GTP functions by stabilizing the protein conformation that binds the tetrahedral intermediate(s) formed during glutamine hydrolysis. Inhibited by the product CTP, via allosteric rather than competitive inhibition. In terms of biological role, catalyzes the ATP-dependent amination of UTP to CTP with either L-glutamine or ammonia as the source of nitrogen. Regulates intracellular CTP levels through interactions with the four ribonucleotide triphosphates. This chain is CTP synthase, found in Wigglesworthia glossinidia brevipalpis.